A 561-amino-acid polypeptide reads, in one-letter code: Proline--tRNA ligase (561 aa).

This sequence belongs to the class-II aminoacyl-tRNA synthetase family. ProS type 1 subfamily. Homodimer.

Its subcellular location is the cytoplasm. It catalyses the reaction tRNA(Pro) + L-proline + ATP = L-prolyl-tRNA(Pro) + AMP + diphosphate. Its function is as follows. Catalyzes the attachment of proline to tRNA(Pro) in a two-step reaction: proline is first activated by ATP to form Pro-AMP and then transferred to the acceptor end of tRNA(Pro). As ProRS can inadvertently accommodate and process non-cognate amino acids such as alanine and cysteine, to avoid such errors it has two additional distinct editing activities against alanine. One activity is designated as 'pretransfer' editing and involves the tRNA(Pro)-independent hydrolysis of activated Ala-AMP. The other activity is designated 'posttransfer' editing and involves deacylation of mischarged Ala-tRNA(Pro). The misacylated Cys-tRNA(Pro) is not edited by ProRS. The polypeptide is Proline--tRNA ligase (Wigglesworthia glossinidia brevipalpis).